Consider the following 425-residue polypeptide: MKIAGKWKRKAAKAPLHRGTVARHPCLIVRLPVEEQGEIEWQVRSSNGESLLSQGRGSIEQVRPALAAYPSVTFTRVLVPATDVTFYALTLPRQARRHVTQVVPFMLEDQLATEIEKLHFAVLEIHGDDGTVAVVEKNRMQRWLAQCDALGLSVDTLLPDARVLPKHQDGWSALQHDDMWLFRQPTGHAMAAESSWCGDLLKASMPLPAIYSYSAASVGGELAQYEWQEEGEWKAQPETDLFTLAATAHLPASVDLRQGDYAPDKAWQNTLLPWRGVGIAFACYLLLVVADAGWAHYQLYQQAEHWRQESVRVYRQIFPSETNVVNPRAQMQQHLQRTAAGGAGKALLDQLTPLQQLMTQNSAIKIQSLSYDGAAGEFRLALQGTSYQELEQFQQQAAAYYQVQAGEMRQENDRVEGRLTLRSQQ.

Residues 1–273 are Cytoplasmic-facing; sequence MKIAGKWKRK…DKAWQNTLLP (273 aa). A helical membrane pass occupies residues 274-290; it reads WRGVGIAFACYLLLVVA. The Periplasmic portion of the chain corresponds to 291-425; it reads DAGWAHYQLY…EGRLTLRSQQ (135 aa).

The protein belongs to the GSP L family. As to quaternary structure, type II secretion system is composed of four main components: the outer membrane complex, the inner membrane complex, the cytoplasmic secretion ATPase and the periplasm-spanning pseudopilus. Forms homodimers. Interacts with OutM/GspM. Interacts with OutE/GspE and OutF/GspF.

The protein resides in the cell inner membrane. Its function is as follows. Inner membrane component of the type II secretion system required for the energy-dependent secretion of extracellular factors such as proteases and toxins from the periplasm. Plays a role in the complex assembly and recruits OutM resulting in a stable complex in the inner membrane. Provides thus a link between the energy-providing OutE protein in the cytoplasm and the rest of the T2SS machinery. The chain is Type II secretion system protein L (outL) from Pectobacterium carotovorum subsp. carotovorum (Erwinia carotovora subsp. carotovora).